Reading from the N-terminus, the 710-residue chain is MASSKELCSIREWAPLTEVIERIPARLQRGFFPANLNLTCVDATEEFLAMGSDAGIVFWYNRHTGEMQKLKAEVATRITCVRVVNSVEYMVAAGCANGQVSIFQIQKELPRDLDLVAPCTKSRPIERYTIRDLHKCVVSCCEWSKNGMKLYSGDRQGVVVLTELDYQAHLSKSVEILSEAYEIVQLSVRQSYLLVATLYRCIVCQMDAQTSQWNITQVGKKDRKQLIDCGAIFLKKQEANKPQLVCGRPGLRFWVADAAGNVSKTVIFRDAVLRSPTWEIPILNPKQRSEPSGTHHTSASTSSTRHSGLADGDVGYVASSNFRQLYLYDGHDSLLVTHDDATLYVLNLDRLKVEAVARGLRKILDFCVCGKEIFVLEGNRTLLRLAPLPEPPNKTAKVIFNPLMPPPVPVLGSHLSQLESPIELQAEPVLQNAEECFELSPVEQLNLNVPIEIAVESPLTQQNRRLEIFRRIGEMDFEQSIVHTTRKTSVGKPPEASGVGIVEIGHETHELRLPLTNAATLMEASYCQMENNGLASPLDMKAAFLQHLPDALSPTTLQKTVAEKAKTLAAELDLPEVHLAPLSQEELHAVQAQTPQISDPLIRCYPTHLEEASIQTSSRENATNPADDYHVGEPVDGIRSFGVSKRKMAPLKFVLSQPKPTLKLEENRDDEEYTSFLPDFRRAGDPLAIHKETPATSDSNTSSEWEFLDN.

WD repeat units lie at residues 31–70 (FFPANLNLTCVDATEEFLAMGSDAGIVFWYNRHTGEMQKL) and 133–172 (LHKCVVSCCEWSKNGMKLYSGDRQGVVVLTELDYQAHLSK). Positions 283–307 (LNPKQRSEPSGTHHTSASTSSTRHS) are disordered. Residues 292–307 (SGTHHTSASTSSTRHS) are compositionally biased toward low complexity. Thr488 is modified (phosphothreonine). Ser553 carries the phosphoserine modification. 2 disordered regions span residues 612-635 (ASIQTSSRENATNPADDYHVGEPV) and 685-710 (DPLAIHKETPATSDSNTSSEWEFLDN). Polar residues-rich tracts occupy residues 613–624 (SIQTSSRENATN) and 694–704 (PATSDSNTSSE).

The protein belongs to the WD repeat KIAA0329 family.

The protein is WD repeat-containing protein CG11141 of Drosophila melanogaster (Fruit fly).